The chain runs to 272 residues: Leucoagglutinating phytohemagglutinin (272 aa).

A signal peptide spans 1 to 20 (MASSKFFTVLFLVLLTHANS). Asparagine 32 carries an N-linked (GlcNAc...) (high mannose) asparagine glycan. The N-linked (GlcNAc...) (complex) asparagine glycan is linked to asparagine 80.

The protein belongs to the leguminous lectin family. In terms of assembly, homotetramer. In terms of processing, N-glycosylated on Asn-80; contains xylose.

In terms of biological role, this insecticidal carbohydrate-binding lectin is toxic for the cowpea weevil. The protein is Leucoagglutinating phytohemagglutinin (DLEC2) of Phaseolus vulgaris (Kidney bean).